We begin with the raw amino-acid sequence, 384 residues long: Gibberellin 3-beta-dioxygenase 1 (384 aa).

The Fe2OG dioxygenase domain occupies 225–327 (TLTSTIHLNM…RISMPYFLGP (103 aa)). Residues His-250, Asp-252, and His-308 each contribute to the Fe cation site. 2-oxoglutarate is bound by residues Arg-318 and Ser-320.

This sequence belongs to the iron/ascorbate-dependent oxidoreductase family. It depends on L-ascorbate as a cofactor. Fe(2+) is required as a cofactor. As to expression, expressed in unopened flowers.

It carries out the reaction gibberellin A20 + 2-oxoglutarate + O2 = gibberellin A1 + succinate + CO2. It functions in the pathway plant hormone biosynthesis; gibberellin biosynthesis. In terms of biological role, catalyzes the 3-beta-hydroxylation of the inactive gibberellin precursors, leading to the formation of bioactive gibberellins. In vitro, converts the precursors GA20, GA5, GA44 and GA9 to the corresponding 3-beta-hydroxylated bioactive products GA1, GA3, GA38 and GA4, respectively. Involved in the production of bioactive GA for vegetative growth and development. May possess 2,3-desaturase activity, catalyzing the conversion of GA9 to 2,3-dehydro-GA9, and GA20 to GA5 (2,3-dehydro GA20). May possess 2-beta-hydroxylase activity, catalyzing the conversion of GA1 and GA4 to the corresponding 2-beta-hydroxylated products GA8 and GA34, respectively. The polypeptide is Gibberellin 3-beta-dioxygenase 1 (Oryza sativa subsp. japonica (Rice)).